Consider the following 213-residue polypeptide: RxLR effector protein PexRD1 (213 aa).

Positions 1–19 (MRACNTLLPTAIVLTSCDA) are cleaved as a signal peptide. The short motif at 50–77 (RQLRGFYATENTDPVNNQDTAHEDGEER) is the RxLR-dEER element.

It belongs to the RxLR effector family.

It localises to the secreted. It is found in the host nucleus. Its function is as follows. Effector that enhances P.infestans colonization of Nicotiana benthamiana leaves. In Phytophthora infestans (strain T30-4) (Potato late blight agent), this protein is RxLR effector protein PexRD1.